The chain runs to 444 residues: Adenylosuccinate lyase (444 aa).

N(6)-(1,2-dicarboxyethyl)-AMP-binding positions include 9–10 (RY), 73–75 (KHD), and 97–98 (TS). The active-site Proton donor/acceptor is the histidine 145. Residue glutamine 219 coordinates N(6)-(1,2-dicarboxyethyl)-AMP. The active-site Proton donor/acceptor is the serine 269. Residues serine 270, 275–277 (KRN), asparagine 283, and 314–318 (SAERI) each bind N(6)-(1,2-dicarboxyethyl)-AMP.

This sequence belongs to the lyase 1 family. Adenylosuccinate lyase subfamily. Homotetramer. Residues from neighboring subunits contribute catalytic and substrate-binding residues to each active site.

The catalysed reaction is N(6)-(1,2-dicarboxyethyl)-AMP = fumarate + AMP. It carries out the reaction (2S)-2-[5-amino-1-(5-phospho-beta-D-ribosyl)imidazole-4-carboxamido]succinate = 5-amino-1-(5-phospho-beta-D-ribosyl)imidazole-4-carboxamide + fumarate. The protein operates within purine metabolism; AMP biosynthesis via de novo pathway; AMP from IMP: step 2/2. Its pathway is purine metabolism; IMP biosynthesis via de novo pathway; 5-amino-1-(5-phospho-D-ribosyl)imidazole-4-carboxamide from 5-amino-1-(5-phospho-D-ribosyl)imidazole-4-carboxylate: step 2/2. Functionally, catalyzes two reactions in de novo purine nucleotide biosynthesis. Catalyzes the breakdown of 5-aminoimidazole- (N-succinylocarboxamide) ribotide (SAICAR or 2-[5-amino-1-(5-phospho-beta-D-ribosyl)imidazole-4-carboxamido]succinate) to 5-aminoimidazole-4-carboxamide ribotide (AICAR or 5-amino-1-(5-phospho-beta-D-ribosyl)imidazole-4-carboxamide) and fumarate, and of adenylosuccinate (ADS or N(6)-(1,2-dicarboxyethyl)-AMP) to adenosine monophosphate (AMP) and fumarate. The protein is Adenylosuccinate lyase (purB) of Archaeoglobus fulgidus (strain ATCC 49558 / DSM 4304 / JCM 9628 / NBRC 100126 / VC-16).